We begin with the raw amino-acid sequence, 150 residues long: MKVIFLVDVKGKGKKGEIKEVPTGYAQNFLIKKNLAKEASSQAIGQLRGQQKAEEKAQAEILAEAKAVKKILDDEKTRVQFKEKVGPDGRTFGSITAKKISEELQKQFKVKVDKRHIVLDHPIRAIGLIEVPVKLHKEVTAEIKLNIAEA.

This sequence belongs to the bacterial ribosomal protein bL9 family.

In terms of biological role, binds to the 23S rRNA. This chain is Large ribosomal subunit protein bL9, found in Streptococcus equi subsp. equi (strain 4047).